Here is a 386-residue protein sequence, read N- to C-terminus: Histidine decarboxylase (386 aa).

His120 is a substrate binding site. Residue Lys233 is modified to N6-(pyridoxal phosphate)lysine.

Belongs to the group II decarboxylase family. As to quaternary structure, homotetramer. Requires pyridoxal 5'-phosphate as cofactor.

The enzyme catalyses L-histidine + H(+) = histamine + CO2. It functions in the pathway siderophore biosynthesis; anguibactin biosynthesis. This Vibrio anguillarum (strain ATCC 68554 / 775) (Listonella anguillarum) protein is Histidine decarboxylase.